The primary structure comprises 150 residues: Transcription antitermination protein NusB (150 aa).

The protein belongs to the NusB family.

Involved in transcription antitermination. Required for transcription of ribosomal RNA (rRNA) genes. Binds specifically to the boxA antiterminator sequence of the ribosomal RNA (rrn) operons. The sequence is that of Transcription antitermination protein NusB from Streptococcus equi subsp. zooepidemicus (strain H70).